A 422-amino-acid chain; its full sequence is 3-isopropylmalate dehydratase large subunit (422 aa).

3 residues coordinate [4Fe-4S] cluster: Cys-294, Cys-354, and Cys-357.

The protein belongs to the aconitase/IPM isomerase family. LeuC type 2 subfamily. In terms of assembly, heterodimer of LeuC and LeuD. Requires [4Fe-4S] cluster as cofactor.

The enzyme catalyses (2R,3S)-3-isopropylmalate = (2S)-2-isopropylmalate. It participates in amino-acid biosynthesis; L-leucine biosynthesis; L-leucine from 3-methyl-2-oxobutanoate: step 2/4. In terms of biological role, catalyzes the isomerization between 2-isopropylmalate and 3-isopropylmalate, via the formation of 2-isopropylmaleate. In Mycolicibacterium smegmatis (strain ATCC 700084 / mc(2)155) (Mycobacterium smegmatis), this protein is 3-isopropylmalate dehydratase large subunit.